The sequence spans 67 residues: Large ribosomal subunit protein eL24 (67 aa).

The Zn(2+) site is built by C7, C10, C33, and C37. A C4-type zinc finger spans residues 7 to 37 (CSYCGKPFEPGTGKMFVRNDGRVLFFCSRKC).

This sequence belongs to the eukaryotic ribosomal protein eL24 family. In terms of assembly, part of the 50S ribosomal subunit. Forms a cluster with proteins L3 and L14. It depends on Zn(2+) as a cofactor.

Functionally, binds to the 23S rRNA. The sequence is that of Large ribosomal subunit protein eL24 from Pyrococcus abyssi (strain GE5 / Orsay).